A 488-amino-acid chain; its full sequence is Multidrug resistance outer membrane protein MdtP (488 aa).

The first 23 residues, 1–23 (MINRQLSRLLLCSILGSTTLISG), serve as a signal peptide directing secretion. C24 carries the N-palmitoyl cysteine lipid modification. C24 carries the S-diacylglycerol cysteine lipid modification.

This sequence belongs to the outer membrane factor (OMF) (TC 1.B.17) family. In terms of assembly, could be part of a tripartite efflux system composed of MdtN, MdtO and MdtP.

The protein localises to the cell outer membrane. Could be involved in resistance to puromycin, acriflavine and tetraphenylarsonium chloride. The chain is Multidrug resistance outer membrane protein MdtP (mdtP) from Shigella flexneri.